The sequence spans 433 residues: NADH-ubiquinone oxidoreductase chain 4 (433 aa).

Helical transmembrane passes span L10 to L30, F45 to L65, I80 to N100, L101 to G121, G132 to L152, M169 to F189, A203 to F223, F234 to L254, S261 to F281, S286 to L306, L331 to G353, L366 to M386, and Y410 to M430.

It belongs to the complex I subunit 4 family.

The protein localises to the mitochondrion membrane. It carries out the reaction a ubiquinone + NADH + 5 H(+)(in) = a ubiquinol + NAD(+) + 4 H(+)(out). Core subunit of the mitochondrial membrane respiratory chain NADH dehydrogenase (Complex I) that is believed to belong to the minimal assembly required for catalysis. Complex I functions in the transfer of electrons from NADH to the respiratory chain. The immediate electron acceptor for the enzyme is believed to be ubiquinone. The chain is NADH-ubiquinone oxidoreductase chain 4 (ND4) from Rhipicephalus sanguineus (Brown dog tick).